The primary structure comprises 434 residues: Serine hydroxymethyltransferase 2 (434 aa).

(6S)-5,6,7,8-tetrahydrofolate-binding positions include Leu136 and 140–142; that span reads GHL. Lys245 bears the N6-(pyridoxal phosphate)lysine mark.

The protein belongs to the SHMT family. In terms of assembly, homodimer. Pyridoxal 5'-phosphate serves as cofactor.

It is found in the cytoplasm. It catalyses the reaction (6R)-5,10-methylene-5,6,7,8-tetrahydrofolate + glycine + H2O = (6S)-5,6,7,8-tetrahydrofolate + L-serine. The protein operates within one-carbon metabolism; tetrahydrofolate interconversion. It functions in the pathway amino-acid biosynthesis; glycine biosynthesis; glycine from L-serine: step 1/1. Catalyzes the reversible interconversion of serine and glycine with tetrahydrofolate (THF) serving as the one-carbon carrier. This reaction serves as the major source of one-carbon groups required for the biosynthesis of purines, thymidylate, methionine, and other important biomolecules. Also exhibits THF-independent aldolase activity toward beta-hydroxyamino acids, producing glycine and aldehydes, via a retro-aldol mechanism. The chain is Serine hydroxymethyltransferase 2 from Rhodopseudomonas palustris (strain ATCC BAA-98 / CGA009).